A 274-amino-acid polypeptide reads, in one-letter code: Large ribosomal subunit protein uL2cz/uL2cy (274 aa).

Disordered stretches follow at residues 1 to 20 (MAIHLYKTSTPSTRNGAVDS) and 223 to 274 (MNPV…RRSK).

The protein belongs to the universal ribosomal protein uL2 family. As to quaternary structure, part of the 50S ribosomal subunit.

Its subcellular location is the plastid. The protein localises to the chloroplast. The polypeptide is Large ribosomal subunit protein uL2cz/uL2cy (rpl2-A) (Eucalyptus globulus subsp. globulus (Tasmanian blue gum)).